Here is a 140-residue protein sequence, read N- to C-terminus: Coiled-coil domain-containing protein 126 (140 aa).

The signal sequence occupies residues 1-26; sequence MFFTISRKNMSQKLSLLLLVFGLIWG. Asparagine 110 and asparagine 134 each carry an N-linked (GlcNAc...) asparagine glycan. The interval 120-140 is disordered; sequence TSGNLVPVTTNKRTNVSGSIR.

The protein resides in the secreted. This is Coiled-coil domain-containing protein 126 (CCDC126) from Homo sapiens (Human).